Reading from the N-terminus, the 216-residue chain is Sporamin B (216 aa).

Positions 1–21 (MKALALLFVLSLYLLPNPAHS) are cleaved as a signal peptide.

The protein belongs to the protease inhibitor I3 (leguminous Kunitz-type inhibitor) family. As to expression, accumulates specifically in tuberous roots and tubers upon tuberization. Sporamin accounts 60 to 80% of the total soluble protein of the organ.

The protein localises to the vacuole. In terms of biological role, major tuberous root protein. This chain is Sporamin B (GSPO-B1), found in Ipomoea batatas (Sweet potato).